The following is a 286-amino-acid chain: MISSKTSFIALIGNPVSHSLSPIMQNAALQYLGLDLIYIAVPCKDEDLELVLNSFKKINCKGLNITIPHKEKVLTLCSEISPIANKLKAINTLKLNSEKKWSATNTDVEGFIYPLKNLNLAKKKSIVLGSGGAARSVIQGLINLNLSTISVISRNKSSLDELIKNFGNEIQLQGLLNSDDQAQVLIREADLIVNTTPAGMKTTKYKNNVMPYGETFWRSLNSQTIVYDLIYNPAPTTLLKFSARKGCKTIDGLEMLVAQGIKSLSFWTDGLEVPFHVMNDALKKYL.

Residues 19–21 and threonine 66 each bind shikimate; that span reads SLS. Lysine 70 (proton acceptor) is an active-site residue. Shikimate-binding residues include asparagine 91 and aspartate 107. Residues 129 to 133 and leucine 229 contribute to the NADP(+) site; that span reads GSGGA. Tyrosine 231 contacts shikimate. Glycine 252 provides a ligand contact to NADP(+).

It belongs to the shikimate dehydrogenase family. In terms of assembly, homodimer.

It catalyses the reaction shikimate + NADP(+) = 3-dehydroshikimate + NADPH + H(+). Its pathway is metabolic intermediate biosynthesis; chorismate biosynthesis; chorismate from D-erythrose 4-phosphate and phosphoenolpyruvate: step 4/7. Involved in the biosynthesis of the chorismate, which leads to the biosynthesis of aromatic amino acids. Catalyzes the reversible NADPH linked reduction of 3-dehydroshikimate (DHSA) to yield shikimate (SA). The protein is Shikimate dehydrogenase (NADP(+)) of Prochlorococcus marinus (strain AS9601).